The sequence spans 442 residues: tRNA-2-methylthio-N(6)-dimethylallyladenosine synthase (442 aa).

The 118-residue stretch at 3-120 (KKLYIETHGC…LPEMIDAARI (118 aa)) folds into the MTTase N-terminal domain. Residues Cys-12, Cys-49, Cys-83, Cys-157, Cys-161, and Cys-164 each coordinate [4Fe-4S] cluster. In terms of domain architecture, Radical SAM core spans 143–375 (RVDGPSAYVS…QHRLNQQGFE (233 aa)). The 65-residue stretch at 378–442 (RQMVGSIQRI…PHSLRGSLLQ (65 aa)) folds into the TRAM domain.

This sequence belongs to the methylthiotransferase family. MiaB subfamily. Monomer. [4Fe-4S] cluster is required as a cofactor.

It localises to the cytoplasm. It carries out the reaction N(6)-dimethylallyladenosine(37) in tRNA + (sulfur carrier)-SH + AH2 + 2 S-adenosyl-L-methionine = 2-methylsulfanyl-N(6)-dimethylallyladenosine(37) in tRNA + (sulfur carrier)-H + 5'-deoxyadenosine + L-methionine + A + S-adenosyl-L-homocysteine + 2 H(+). Catalyzes the methylthiolation of N6-(dimethylallyl)adenosine (i(6)A), leading to the formation of 2-methylthio-N6-(dimethylallyl)adenosine (ms(2)i(6)A) at position 37 in tRNAs that read codons beginning with uridine. This Pseudomonas savastanoi pv. phaseolicola (strain 1448A / Race 6) (Pseudomonas syringae pv. phaseolicola (strain 1448A / Race 6)) protein is tRNA-2-methylthio-N(6)-dimethylallyladenosine synthase.